We begin with the raw amino-acid sequence, 344 residues long: L-rhamnose-proton symporter (344 aa).

Transmembrane regions (helical) follow at residues Ala-4–Ala-24, Trp-38–Leu-58, Phe-68–Ile-88, Met-101–Ile-121, Thr-137–Leu-157, Leu-175–Ala-195, Leu-214–Ile-234, Ile-259–Gly-279, Met-290–Leu-310, and Val-321–Gly-341.

This sequence belongs to the L-rhamnose transporter (TC 2.A.7.6) family.

Its subcellular location is the cell inner membrane. It catalyses the reaction L-rhamnopyranose(in) + H(+)(in) = L-rhamnopyranose(out) + H(+)(out). Its function is as follows. Uptake of L-rhamnose across the cytoplasmic membrane with the concomitant transport of protons into the cell (symport system). This is L-rhamnose-proton symporter from Salmonella dublin (strain CT_02021853).